The following is a 323-amino-acid chain: Beta-ketoacyl-[acyl-carrier-protein] synthase III (323 aa).

Residues C112 and H250 contribute to the active site. Positions 251 to 255 (QANYR) are ACP-binding. N280 is a catalytic residue.

It belongs to the thiolase-like superfamily. FabH family. Homodimer.

Its subcellular location is the cytoplasm. The catalysed reaction is malonyl-[ACP] + acetyl-CoA + H(+) = 3-oxobutanoyl-[ACP] + CO2 + CoA. Its pathway is lipid metabolism; fatty acid biosynthesis. Its function is as follows. Catalyzes the condensation reaction of fatty acid synthesis by the addition to an acyl acceptor of two carbons from malonyl-ACP. Catalyzes the first condensation reaction which initiates fatty acid synthesis and may therefore play a role in governing the total rate of fatty acid production. Possesses both acetoacetyl-ACP synthase and acetyl transacylase activities. Its substrate specificity determines the biosynthesis of branched-chain and/or straight-chain of fatty acids. The polypeptide is Beta-ketoacyl-[acyl-carrier-protein] synthase III (Clostridium beijerinckii (strain ATCC 51743 / NCIMB 8052) (Clostridium acetobutylicum)).